A 425-amino-acid polypeptide reads, in one-letter code: Formyl-CoA:oxalate CoA-transferase (425 aa).

CoA is bound by residues 17–18, Arg38, 72–75, 96–98, Arg104, and 136–139; these read QS, LDTK, NFG, and KVYE. Residue Asp168 is the Nucleophile of the active site. Position 247-249 (247-249) interacts with substrate; that stretch reads GGQ.

The protein belongs to the CoA-transferase III family. Frc subfamily. Homodimer.

The catalysed reaction is formyl-CoA + oxalate = oxalyl-CoA + formate. Its pathway is metabolic intermediate degradation; oxalate degradation; CO(2) and formate from oxalate: step 1/2. Its function is as follows. Involved in the catabolism of oxalate and in the adapatation to low pH via the induction of the oxalate-dependent acid tolerance response (ATR). Catalyzes the transfer of the CoA moiety from formyl-CoA to oxalate. The protein is Formyl-CoA:oxalate CoA-transferase of Rhodopseudomonas palustris (strain HaA2).